The primary structure comprises 156 residues: SsrA-binding protein (156 aa).

Residues 135 to 150 show a composition bias toward basic and acidic residues; it reads KRDTIKDREWQRDRSR. A disordered region spans residues 135 to 156; the sequence is KRDTIKDREWQRDRSRIMKKNT.

The protein belongs to the SmpB family.

It localises to the cytoplasm. In terms of biological role, required for rescue of stalled ribosomes mediated by trans-translation. Binds to transfer-messenger RNA (tmRNA), required for stable association of tmRNA with ribosomes. tmRNA and SmpB together mimic tRNA shape, replacing the anticodon stem-loop with SmpB. tmRNA is encoded by the ssrA gene; the 2 termini fold to resemble tRNA(Ala) and it encodes a 'tag peptide', a short internal open reading frame. During trans-translation Ala-aminoacylated tmRNA acts like a tRNA, entering the A-site of stalled ribosomes, displacing the stalled mRNA. The ribosome then switches to translate the ORF on the tmRNA; the nascent peptide is terminated with the 'tag peptide' encoded by the tmRNA and targeted for degradation. The ribosome is freed to recommence translation, which seems to be the essential function of trans-translation. This chain is SsrA-binding protein, found in Legionella pneumophila (strain Corby).